The chain runs to 475 residues: Lactate utilization protein B (475 aa).

2 consecutive 4Fe-4S ferredoxin-type domains span residues 304-334 (GTEF…GHSY) and 353-382 (YEDH…LHEL). Residues Cys313, Cys316, Cys319, Cys323, Cys366, Cys369, and Cys373 each contribute to the [4Fe-4S] cluster site.

Belongs to the LutB/YkgF family.

Is involved in L-lactate degradation and allows cells to grow with lactate as the sole carbon source. Has probably a role as an electron transporter during oxidation of L-lactate. In Shouchella clausii (strain KSM-K16) (Alkalihalobacillus clausii), this protein is Lactate utilization protein B.